The following is a 504-amino-acid chain: Maturase K (504 aa).

Belongs to the intron maturase 2 family. MatK subfamily.

It localises to the plastid. Its subcellular location is the chloroplast. Its function is as follows. Usually encoded in the trnK tRNA gene intron. Probably assists in splicing its own and other chloroplast group II introns. The chain is Maturase K from Nepenthes gracilis (Slender pitcher plant).